The following is a 270-amino-acid chain: Large ribosomal subunit protein uL30 (270 aa).

Position 1 is an N-acetylmethionine (Met-1). Repeat copies occupy residues 7 to 18 (KKKKVATVPGTL), 19 to 29 (KKKVPAGPKTL), 30 to 40 (KKKVPAVPETL), 41 to 52 (KKKRRNFAELKV), 53 to 64 (KRLRKKFALKTL), and 65 to 76 (RKARRKLIYEKA). The tract at residues 7 to 76 (KKKKVATVPG…ARRKLIYEKA (70 aa)) is 6 X 12 AA tandem repeats. The residue at position 39 (Thr-39) is a Phosphothreonine. Residue Lys-146 is modified to N6-acetyllysine. The residue at position 149 (Lys-149) is an N6-succinyllysine. Tyr-161 is subject to Phosphotyrosine.

This sequence belongs to the universal ribosomal protein uL30 family. Component of the large ribosomal subunit. Homodimer. Interacts with DHX33.

The protein localises to the cytoplasm. Its function is as follows. Component of the large ribosomal subunit. The ribosome is a large ribonucleoprotein complex responsible for the synthesis of proteins in the cell. Binds to G-rich structures in 28S rRNA and in mRNAs. Plays a regulatory role in the translation apparatus; inhibits cell-free translation of mRNAs. This is Large ribosomal subunit protein uL30 (Rpl7) from Mus musculus (Mouse).